Here is a 175-residue protein sequence, read N- to C-terminus: Putative transmembrane protein ORF175 (175 aa).

A run of 4 helical transmembrane segments spans residues 14-34 (LGIV…GSFM), 58-78 (VLSN…AIAF), 101-121 (IVVA…FALF), and 142-162 (ITPF…VLSI).

Its subcellular location is the host membrane. In Acidianus two-tailed virus (ATV), this protein is Putative transmembrane protein ORF175.